Reading from the N-terminus, the 424-residue chain is Histidine--tRNA ligase (424 aa).

Belongs to the class-II aminoacyl-tRNA synthetase family. Homodimer.

The protein resides in the cytoplasm. The enzyme catalyses tRNA(His) + L-histidine + ATP = L-histidyl-tRNA(His) + AMP + diphosphate + H(+). The polypeptide is Histidine--tRNA ligase (Desulfitobacterium hafniense (strain DSM 10664 / DCB-2)).